The following is a 335-amino-acid chain: NADH-quinone oxidoreductase subunit H (335 aa).

8 helical membrane-spanning segments follow: residues 11–31 (VILT…CGAL), 81–101 (VIFT…FVVI), 114–134 (IGLL…LFAG), 154–174 (VSYE…VGSF), 187–207 (LWFI…GVAV), 238–258 (FFVG…TLFF), 270–290 (QLSF…FILL), and 307–327 (WKFC…IVLY).

The protein belongs to the complex I subunit 1 family. As to quaternary structure, NDH-1 is composed of 13 different subunits. Subunits NuoA, H, J, K, L, M, N constitute the membrane sector of the complex.

Its subcellular location is the cell inner membrane. It carries out the reaction a quinone + NADH + 5 H(+)(in) = a quinol + NAD(+) + 4 H(+)(out). In terms of biological role, NDH-1 shuttles electrons from NADH, via FMN and iron-sulfur (Fe-S) centers, to quinones in the respiratory chain. The immediate electron acceptor for the enzyme in this species is believed to be ubiquinone. Couples the redox reaction to proton translocation (for every two electrons transferred, four hydrogen ions are translocated across the cytoplasmic membrane), and thus conserves the redox energy in a proton gradient. This subunit may bind ubiquinone. In Pseudomonas putida (strain ATCC 700007 / DSM 6899 / JCM 31910 / BCRC 17059 / LMG 24140 / F1), this protein is NADH-quinone oxidoreductase subunit H.